The following is a 183-amino-acid chain: Large ribosomal subunit protein uL22 (183 aa).

The segment at 163–183 is disordered; it reads KTAAKKQSAKKLKKQKMMYRE. The span at 165-183 shows a compositional bias: basic residues; that stretch reads AAKKQSAKKLKKQKMMYRE.

This sequence belongs to the universal ribosomal protein uL22 family.

The sequence is that of Large ribosomal subunit protein uL22 (rpl-17) from Pectinaria gouldii (Trumpet worm).